Reading from the N-terminus, the 451-residue chain is UDP-N-acetylmuramate--L-alanine ligase (451 aa).

110–116 is a binding site for ATP; that stretch reads GTHGKTT.

The protein belongs to the MurCDEF family.

The protein localises to the cytoplasm. The catalysed reaction is UDP-N-acetyl-alpha-D-muramate + L-alanine + ATP = UDP-N-acetyl-alpha-D-muramoyl-L-alanine + ADP + phosphate + H(+). The protein operates within cell wall biogenesis; peptidoglycan biosynthesis. Cell wall formation. The polypeptide is UDP-N-acetylmuramate--L-alanine ligase (Francisella tularensis subsp. mediasiatica (strain FSC147)).